Consider the following 310-residue polypeptide: Lipoyl synthase (310 aa).

[4Fe-4S] cluster is bound by residues Cys-54, Cys-59, Cys-65, Cys-80, Cys-84, Cys-87, and Ser-295. The Radical SAM core domain occupies 66 to 284 (FASGTATFLI…LFGEDNLGFM (219 aa)).

The protein belongs to the radical SAM superfamily. Lipoyl synthase family. The cofactor is [4Fe-4S] cluster.

Its subcellular location is the cytoplasm. It carries out the reaction [[Fe-S] cluster scaffold protein carrying a second [4Fe-4S](2+) cluster] + N(6)-octanoyl-L-lysyl-[protein] + 2 oxidized [2Fe-2S]-[ferredoxin] + 2 S-adenosyl-L-methionine + 4 H(+) = [[Fe-S] cluster scaffold protein] + N(6)-[(R)-dihydrolipoyl]-L-lysyl-[protein] + 4 Fe(3+) + 2 hydrogen sulfide + 2 5'-deoxyadenosine + 2 L-methionine + 2 reduced [2Fe-2S]-[ferredoxin]. Its pathway is protein modification; protein lipoylation via endogenous pathway; protein N(6)-(lipoyl)lysine from octanoyl-[acyl-carrier-protein]: step 2/2. Catalyzes the radical-mediated insertion of two sulfur atoms into the C-6 and C-8 positions of the octanoyl moiety bound to the lipoyl domains of lipoate-dependent enzymes, thereby converting the octanoylated domains into lipoylated derivatives. The sequence is that of Lipoyl synthase from Prochlorococcus marinus (strain MIT 9215).